The sequence spans 343 residues: N-acetyl-gamma-glutamyl-phosphate reductase (343 aa).

The active site involves cysteine 149.

It belongs to the NAGSA dehydrogenase family. Type 1 subfamily.

The protein localises to the cytoplasm. It catalyses the reaction N-acetyl-L-glutamate 5-semialdehyde + phosphate + NADP(+) = N-acetyl-L-glutamyl 5-phosphate + NADPH + H(+). It participates in amino-acid biosynthesis; L-arginine biosynthesis; N(2)-acetyl-L-ornithine from L-glutamate: step 3/4. Functionally, catalyzes the NADPH-dependent reduction of N-acetyl-5-glutamyl phosphate to yield N-acetyl-L-glutamate 5-semialdehyde. The polypeptide is N-acetyl-gamma-glutamyl-phosphate reductase (Methanococcus maripaludis (strain C6 / ATCC BAA-1332)).